A 393-amino-acid polypeptide reads, in one-letter code: Putative odorant receptor 69a, isoform A (393 aa).

At 1–39 (MQLHDHMKYIDLGCKMACIPRYQWKGRPTERQFYASEQR) the chain is on the cytoplasmic side. Residues 40-60 (IVFLLGTICQIFQITGVLIYW) form a helical membrane-spanning segment. The Extracellular segment spans residues 61–76 (YCNGRLATETGTFVAQ). The chain crosses the membrane as a helical span at residues 77–97 (LSEMCSSFCLTFVGFCNVYAI). At 98 to 139 (STNRNQIETLLEELHQIYPRYRKNHYRCQHYFDMAMTIMRIE) the chain is on the cytoplasmic side. The chain crosses the membrane as a helical span at residues 140–160 (FLFYMILYVYYNSAPLWVLLW). Over 161 to 189 (EHLHEEYDLSFKTQTNTWFPWKVHGSALG) the chain is Extracellular. Residues 190-210 (FGMAVLSITVGSFVGVGFSIV) traverse the membrane as a helical segment. The Cytoplasmic segment spans residues 211–269 (TQNLICLLTFQLKLHYDGISSQLVSLDCRRPGAHKELSILIAHHSRILQLGDQVNDIMN). The helical transmembrane segment at 270–290 (FVFGSSLVGATIAICMSSVSI) threads the bilayer. Over 291-304 (MLLDLASAFKYASG) the chain is Extracellular. A helical transmembrane segment spans residues 305 to 325 (LVAFVLYNFVICYMGTEVTLA). At 326–365 (SGKVLPAAFYNNWYEGDLVYRRMLLILMMRATKPYMWKTY) the chain is on the cytoplasmic side. Residues 366 to 386 (KLAPVSITTYMATLKFSYQMF) traverse the membrane as a helical segment. Residues 387–393 (TCVRSLK) are Extracellular-facing.

This sequence belongs to the insect chemoreceptor superfamily. Heteromeric odorant receptor channel (TC 1.A.69) family. Or49a subfamily. As to quaternary structure, interacts with Orco. Complexes exist early in the endomembrane system in olfactory sensory neurons (OSNs), coupling these complexes to the conserved ciliary trafficking pathway. As to expression, expressed in olfactory sensory neurons in the antenna.

It localises to the cell membrane. Its function is as follows. Odorant receptor which mediates acceptance or avoidance behavior, depending on its substrates. The odorant receptor repertoire encodes a large collection of odor stimuli that vary widely in identity, intensity, and duration. May form a complex with Orco to form odorant-sensing units, providing sensitive and prolonged odorant signaling and calcium permeability. In Drosophila melanogaster (Fruit fly), this protein is Putative odorant receptor 69a, isoform A (Or69a).